The following is a 238-amino-acid chain: Snake venom metalloproteinase HF-1 (238 aa).

Residues 17-221 (RYIQLVVVAD…YNPQCILNKP (205 aa)) enclose the Peptidase M12B domain. Residue Asp106 participates in Ca(2+) binding. 2 cysteine pairs are disulfide-bonded: Cys130–Cys216 and Cys174–Cys181. His158 serves as a coordination point for Zn(2+). Glu159 is a catalytic residue. Zn(2+) contacts are provided by His162 and His168. The Ca(2+) site is built by Cys216 and Asn219.

Monomer. The cofactor is Zn(2+). As to expression, expressed by the venom gland.

The protein resides in the secreted. With respect to regulation, inhibited by EDTA and EGTA. Inhibited by serum and antihemorrhagic factors Da2-I and Da2-II from D.albiventris. Not inhibited by PMSF or SBT-I. Snake venom zinc metalloprotease that is weakly hemorrhagic and has Aalpha, Bbeta fibrinogenolytic activities. Cleaves the Aalpha chain of fibrinogen first, followed by the Bbeta chain and shows no effect on the gamma chain. Has caseinolytic activity. Induces dose-dependent edema. The polypeptide is Snake venom metalloproteinase HF-1 (Bothrops marajoensis (Marajo lancehead)).